A 676-amino-acid chain; its full sequence is UvrABC system protein C (676 aa).

A GIY-YIG domain is found at 16-95; the sequence is VEPGVYRFRD…IKEFDPRFNI (80 aa). One can recognise a UVR domain in the interval 208-243; it reads DRLVRDLERKMTAAAEDLDFERAARLRDDIGALRRA.

The protein belongs to the UvrC family. As to quaternary structure, interacts with UvrB in an incision complex.

The protein resides in the cytoplasm. Its function is as follows. The UvrABC repair system catalyzes the recognition and processing of DNA lesions. UvrC both incises the 5' and 3' sides of the lesion. The N-terminal half is responsible for the 3' incision and the C-terminal half is responsible for the 5' incision. This Mycobacterium sp. (strain KMS) protein is UvrABC system protein C.